A 300-amino-acid chain; its full sequence is DNA repair protein PprA (300 aa).

A Phosphothreonine modification is found at Thr88. The residue at position 128 (Ser128) is a Phosphoserine. Thr160 is subject to Phosphothreonine.

In terms of processing, phosphorylated by RqkA in vitro. Phosphorylated primarily at Thr-88, and to a little extent at Ser-128 and Thr-160.

Its activity is regulated as follows. Phosphorylation increases DNA binding affinity. In terms of biological role, dsDNA-binding protein that contributes to the ionizing radiation resistance of D.radiodurans. Plays a role in DNA repair and genome reconstitution, and is necessary for recovery from severe genomic fragmentation as a result of exposure to severe levels of ionizing radiation. In vitro, binds to double-stranded DNA carrying strand breaks and stimulates the DNA end-joining reaction catalyzed by DNA ligases. Thus, PprA plays a critical role in a non-homologous end-joining (NHEJ) pathway for the repair of radiation-induced DNA double-strands breaks. Cannot bind to dsDNA without strand breaks or single-stranded DNA. The chain is DNA repair protein PprA (pprA) from Deinococcus radiodurans (strain ATCC 13939 / DSM 20539 / JCM 16871 / CCUG 27074 / LMG 4051 / NBRC 15346 / NCIMB 9279 / VKM B-1422 / R1).